Here is a 433-residue protein sequence, read N- to C-terminus: L-saccharopine oxidase (433 aa).

An N-terminal signal peptide occupies residues methionine 1–alanine 18. Asparagine 24, asparagine 119, asparagine 188, and asparagine 229 each carry an N-linked (GlcNAc...) asparagine glycan.

The protein belongs to the MSOX/MTOX family. As to quaternary structure, monomer. The cofactor is FAD.

The protein localises to the secreted. Its subcellular location is the cytoplasm. It is found in the nucleus. It carries out the reaction L-saccharopine + O2 + H2O = (S)-2-amino-6-oxohexanoate + L-glutamate + H2O2. This Schizosaccharomyces pombe (strain 972 / ATCC 24843) (Fission yeast) protein is L-saccharopine oxidase.